A 356-amino-acid polypeptide reads, in one-letter code: Fructose-bisphosphate aldolase 1, chloroplastic (356 aa).

The N-terminal 6 residues, 1-6 (GLTIRA), are a transit peptide targeting the chloroplast. Substrate is bound by residues Arg-53 and Lys-143. The active-site Proton acceptor is Glu-183. Lys-225 acts as the Schiff-base intermediate with dihydroxyacetone-P in catalysis.

The protein belongs to the class I fructose-bisphosphate aldolase family.

The protein resides in the plastid. The protein localises to the chloroplast. It catalyses the reaction beta-D-fructose 1,6-bisphosphate = D-glyceraldehyde 3-phosphate + dihydroxyacetone phosphate. It participates in carbohydrate degradation; glycolysis; D-glyceraldehyde 3-phosphate and glycerone phosphate from D-glucose: step 4/4. The sequence is that of Fructose-bisphosphate aldolase 1, chloroplastic from Pisum sativum (Garden pea).